The primary structure comprises 506 residues: 2-isopropylmalate synthase (506 aa).

The Pyruvate carboxyltransferase domain maps to 4 to 266; that stretch reads ILFMDTTLRD…EPSMTLKEIK (263 aa). Residues Asp13, His201, His203, and Asn237 each contribute to the Mn(2+) site. A regulatory domain region spans residues 390–506; sequence NITQLQVHFV…KLKSFIQLVK (117 aa).

The protein belongs to the alpha-IPM synthase/homocitrate synthase family. LeuA type 1 subfamily. Homodimer. Requires Mn(2+) as cofactor.

The protein resides in the cytoplasm. The enzyme catalyses 3-methyl-2-oxobutanoate + acetyl-CoA + H2O = (2S)-2-isopropylmalate + CoA + H(+). It functions in the pathway amino-acid biosynthesis; L-leucine biosynthesis; L-leucine from 3-methyl-2-oxobutanoate: step 1/4. Functionally, catalyzes the condensation of the acetyl group of acetyl-CoA with 3-methyl-2-oxobutanoate (2-ketoisovalerate) to form 3-carboxy-3-hydroxy-4-methylpentanoate (2-isopropylmalate). The sequence is that of 2-isopropylmalate synthase from Bacillus cereus (strain AH820).